A 305-amino-acid chain; its full sequence is Acetyl-coenzyme A carboxylase carboxyl transferase subunit beta (305 aa).

Positions 27 to 296 constitute a CoA carboxyltransferase N-terminal domain; the sequence is LWVKCSSCRE…SPAKAELAGR (270 aa). Zn(2+) is bound by residues cysteine 31, cysteine 34, cysteine 50, and cysteine 53. The C4-type zinc finger occupies 31-53; sequence CSSCRELIYKKQLNDNLKVCPKC.

It belongs to the AccD/PCCB family. Acetyl-CoA carboxylase is a heterohexamer composed of biotin carboxyl carrier protein (AccB), biotin carboxylase (AccC) and two subunits each of ACCase subunit alpha (AccA) and ACCase subunit beta (AccD). The cofactor is Zn(2+).

It localises to the cytoplasm. It carries out the reaction N(6)-carboxybiotinyl-L-lysyl-[protein] + acetyl-CoA = N(6)-biotinyl-L-lysyl-[protein] + malonyl-CoA. It participates in lipid metabolism; malonyl-CoA biosynthesis; malonyl-CoA from acetyl-CoA: step 1/1. Component of the acetyl coenzyme A carboxylase (ACC) complex. Biotin carboxylase (BC) catalyzes the carboxylation of biotin on its carrier protein (BCCP) and then the CO(2) group is transferred by the transcarboxylase to acetyl-CoA to form malonyl-CoA. This Chloroflexus aurantiacus (strain ATCC 29366 / DSM 635 / J-10-fl) protein is Acetyl-coenzyme A carboxylase carboxyl transferase subunit beta.